The chain runs to 428 residues: MENYSDQGGDGIELLDLLFDKNDGILRYENMGQQNNQLWPVQDPHMMMPPQGNEDFFNALIGGSDSVSGSPVWSPSPSDSGISEDPHSDHIDSPPPNASPPMEPHIVVSQTQHSLNINFPFDFNGWETGFLPDQAGGTQCASETPQAQPATGFPLTVKDLLLSGTPETAAKVSQQSYQELILTEDEKRLLAKEGMTLPNQFPLTKYEERILKKIRRKIRNKQSAQESRKKKKEYIDGLESRMAACSAHNHELQRKVFQLEKCNISLMEQLRRLQALVMNGSNKPVQAGTCVLVLLLSFTLILLPNLKPFTDTKVSQHGDFSPMRVQSRSLHNLQSSRVLRNLDHPYSMTENAKILPRFPEDKTMEEIASLLGRLHRRPQFTEYDPESHNHSFDQHDEHHHGDPITGHVATVTLNPRRGSRRSPHADDM.

The Cytoplasmic segment spans residues 1-286; it reads MENYSDQGGD…VMNGSNKPVQ (286 aa). Over residues 67 to 83 the composition is skewed to low complexity; the sequence is VSGSPVWSPSPSDSGIS. The interval 67 to 104 is disordered; the sequence is VSGSPVWSPSPSDSGISEDPHSDHIDSPPPNASPPMEP. Positions 93-103 are enriched in pro residues; that stretch reads SPPPNASPPME. One can recognise a bZIP domain in the interval 210–273; the sequence is ILKKIRRKIR…ISLMEQLRRL (64 aa). The tract at residues 212-241 is basic motif; sequence KKIRRKIRNKQSAQESRKKKKEYIDGLESR. A leucine-zipper region spans residues 252 to 273; sequence LQRKVFQLEKCNISLMEQLRRL. A helical; Signal-anchor for type II membrane protein membrane pass occupies residues 287–303; it reads AGTCVLVLLLSFTLILL. Topologically, residues 304 to 428 are lumenal; the sequence is PNLKPFTDTK…SRRSPHADDM (125 aa). The segment at 381–428 is disordered; the sequence is TEYDPESHNHSFDQHDEHHHGDPITGHVATVTLNPRRGSRRSPHADDM. A compositionally biased stretch (basic and acidic residues) spans 385 to 402; that stretch reads PESHNHSFDQHDEHHHGD. N-linked (GlcNAc...) asparagine glycosylation occurs at asparagine 389.

The protein belongs to the bZIP family. ATF subfamily. As to quaternary structure, binds DNA as a dimer. In terms of processing, controlled by regulated intramembrane proteolysis (RIP). A fragment containing the cytoplasmic transcription factor domain is released by proteolysis. The cleavage seems to be performed sequentially by site-1 and site-2 proteases.

The protein resides in the endoplasmic reticulum membrane. Its subcellular location is the nucleus. Functionally, transcriptional activator. Binds the cAMP response element (CRE). Activates transcription through box-B element and CRE. Seems to function synergistically with atf6. Regulates FGF21 transcription. The protein is Cyclic AMP-responsive element-binding protein 3-like protein 3-A (creb3l3a) of Danio rerio (Zebrafish).